A 102-amino-acid polypeptide reads, in one-letter code: Large ribosomal subunit protein bL21 (102 aa).

It belongs to the bacterial ribosomal protein bL21 family. Part of the 50S ribosomal subunit. Contacts protein L20.

This protein binds to 23S rRNA in the presence of protein L20. The polypeptide is Large ribosomal subunit protein bL21 (Lachnospira eligens (strain ATCC 27750 / DSM 3376 / VPI C15-48 / C15-B4) (Eubacterium eligens)).